The following is a 740-amino-acid chain: Isocitrate dehydrogenase [NADP] 2 (740 aa).

N83 and S85 together coordinate NADP(+). 5 residues coordinate D-threo-isocitrate: S130, N133, R137, R143, and K253. Residue N133 coordinates NADP(+). Residue D348 participates in Mg(2+) binding. The D-threo-isocitrate site is built by Y418 and R546. 2 residues coordinate Mg(2+): D547 and D551. NADP(+) contacts are provided by S584, H588, R599, D601, and R648.

This sequence belongs to the monomeric-type IDH family. Monomer. It depends on Mg(2+) as a cofactor. The cofactor is Mn(2+).

It carries out the reaction D-threo-isocitrate + NADP(+) = 2-oxoglutarate + CO2 + NADPH. With respect to regulation, IDH activity is not significantly affected by monovalent cations. The combined addition of Mn(2+) and another divalent cation results in the decrease of the activity. Functionally, catalyzes the oxidative decarboxylation of isocitrate to 2-oxoglutarate and carbon dioxide with the concomitant reduction of NADP(+). Cannot use NAD(+). This Psychrobacter sp. (strain 13A) protein is Isocitrate dehydrogenase [NADP] 2.